The following is a 285-amino-acid chain: Urease accessory protein UreD 1 (285 aa).

This sequence belongs to the UreD family. As to quaternary structure, ureD, UreF and UreG form a complex that acts as a GTP-hydrolysis-dependent molecular chaperone, activating the urease apoprotein by helping to assemble the nickel containing metallocenter of UreC. The UreE protein probably delivers the nickel.

The protein resides in the cytoplasm. Required for maturation of urease via the functional incorporation of the urease nickel metallocenter. In Pseudomonas syringae pv. tomato (strain ATCC BAA-871 / DC3000), this protein is Urease accessory protein UreD 1.